The following is a 371-amino-acid chain: Cyanide hydratase (371 aa).

The CN hydrolase domain occupies Tyr-8 to Leu-286. Glu-48 (proton acceptor) is an active-site residue. The active site involves Lys-130. The active-site Nucleophile is Cys-165. The segment at Asp-326 to Ser-356 is disordered.

This sequence belongs to the carbon-nitrogen hydrolase superfamily. Nitrilase family. In terms of assembly, oligomer of dimers, forming left-handed helical fibers.

It catalyses the reaction formamide = hydrogen cyanide + H2O. Its function is as follows. Catalyzes the hydration of cyanide to formamide. Degradation of cyanide may be important for plant pathogenic fungi in infection of cyanogenic plants. Can also transform some nitriles like 2-cyanopyridine and fumaronitrile and has a minor activity with 4-cyanophenyl acetonitrile (4-CPA). This chain is Cyanide hydratase, found in Botryotinia fuckeliana (strain T4) (Noble rot fungus).